The sequence spans 329 residues: Taste receptor type 2 member 102 (329 aa).

The Extracellular portion of the chain corresponds to 1–9 (MNMESVLHN). The helical transmembrane segment at 10–30 (FATVLIYVEFIFGNLSNGFIV) threads the bilayer. Residues 31-47 (LSNFLDWVIKQKLSLID) lie on the Cytoplasmic side of the membrane. The chain crosses the membrane as a helical span at residues 48–68 (KILLTLAISRITLIWEIYAWF). Topologically, residues 69–85 (KSLYDPSSFLIGIEFQI) are extracellular. A helical membrane pass occupies residues 86–108 (IYFSWVLSSHFSLWLATTLSVFY). Over 109 to 129 (LLRIANCSWQIFLYLKWRLKQ) the chain is Cytoplasmic. The chain crosses the membrane as a helical span at residues 130–150 (LIVGMLLGSLVFLLGNLMQSM). Topologically, residues 151 to 181 (LEERFYQYGRNTSVNTMSNDLAMWTELIFFN) are extracellular. A glycan (N-linked (GlcNAc...) asparagine) is linked at asparagine 161. Residues 182–202 (MAMFSVIPFTLALISFLLLIF) form a helical membrane-spanning segment. The Cytoplasmic segment spans residues 203–231 (SLWKHLQKMQLISRRHRDPSTKAHMNALR). A helical membrane pass occupies residues 232–252 (IMVSFLLLYTMHFLSLLISWI). At 253–262 (AQKHQSELAD) the chain is on the extracellular side. A helical transmembrane segment spans residues 263-283 (IIGMITELMYPSVHSCILILG). At 284–329 (NSKLKQTSLCMLRHLRCRLKGENITIAYSNQITSFCVFCVANKSMR) the chain is on the cytoplasmic side.

It belongs to the G-protein coupled receptor T2R family.

The protein resides in the membrane. Its function is as follows. Putative taste receptor which may play a role in the perception of bitterness. This Mus musculus (Mouse) protein is Taste receptor type 2 member 102.